The chain runs to 359 residues: Guanine nucleotide-binding protein G(o) subunit alpha (359 aa).

Residues 1–26 (MGGCVSATPEEREAKTRSSVIDRQQR) are disordered. Residue glycine 2 is the site of N-myristoyl glycine attachment. Cysteine 4 carries S-palmitoyl cysteine lipidation. The G-alpha domain maps to 34-359 (NTIKILLLGA…RENLEAANLL (326 aa)). The tract at residues 37–50 (KILLLGAGESGKST) is G1 motif. Residues 42-49 (GAGESGKS), 178-184 (LRSRVQT), 203-207 (DVGGQ), 272-275 (NKAD), and alanine 331 each bind GTP. Mg(2+)-binding residues include serine 49 and threonine 184. The interval 176-184 (DVLRSRVQT) is G2 motif. The G3 motif stretch occupies residues 199–208 (YRVVDVGGQR). The G4 motif stretch occupies residues 268–275 (ILFLNKAD). A G5 motif region spans residues 329 to 334 (TTATDT).

This sequence belongs to the G-alpha family. G(i/o/t/z) subfamily. As to quaternary structure, g proteins are composed of 3 units; alpha, beta and gamma. The alpha chain contains the guanine nucleotide binding site.

Its function is as follows. Guanine nucleotide-binding proteins (G proteins) are involved as modulators or transducers in various transmembrane signaling systems. The G(o) protein function is not clear. This is Guanine nucleotide-binding protein G(o) subunit alpha from Geodia cydonium (Sponge).